The primary structure comprises 651 residues: MSTELTQAKGSTSRYTSRKSCAIEFNTKIDEVQYISVGLDTSTIKVFIDNNTQIPYVGNFINGNVISWVSDPVKCILTTSSGTYTLFSYGLTKNIPNLLDYDSDSATDDSTRFKKAILAGTESLYIPPREIYKDVMIGELDITSTLRLWGDSGSNINTGGSTIKKIASASYGIHFNGTGQTTRPMGGGLFNLQVRGESSTDTGPLIKVTSWSYMRINNCAIQNISDWGIIARDMMESSCEYTLFRRIGSDTTGILLMDDYIGTPNSNVNNFHFSNNTLGYSSGNWIKSSTNSNPDLIWIERNKFEWDGTPTSANITPKAVIDFGQMSRCRITNNGFTHFTTDHNNYEGILRMRSGCAYLTKLIDNDALSCSGYFGSVEGGKLQASGNFYNRGVVASGNMQFNVTSTRPQSIEPVICFTSNGNITSVGDYIDPNFISAHNMFGTSNNMFQTDTMASLYTTMNVPSLVEIRRFQLGKQYLDSNTVLTIQARVKCVDTAGTNGELKLNIDGTTDIGSSTITASTGWQLITFQLKPSQIGAGSLRFINSGTVSILFDGIYIQRSKYIDWNFAFNPGAIAAGASITSALQSYTDTIGVTGLIQSFSQPKFDGNINGLLCSVVSNNINGSFYVTLYNPTASPITPTITRCYIRLFLI.

A catalytic region spans residues D100–D428. Residues E236, D295, E305, and D307 contribute to the active site. A carbohydrate binding region spans residues M447–S560. The tract at residues K561–I651 is lectin-like.

In the C-terminal section; belongs to the K21-specific depolymerase family.

It is found in the virion. Functions as a receptor binding protein (RBP) and probably mediates the attachment to the host capsular exopolysaccharides. Displays a depolymerase activity that specifically degrades the K21-type polysaccharides of Klebsiella pneumoniae capsule. The polypeptide is Depolymerase, capsule K21-specific (Klebsiella (Bacteriophage K64-1)).